Consider the following 2430-residue polypeptide: Protein TASOR 2 (2430 aa).

Phosphoserine is present on residues S19, S219, and S384. Disordered stretches follow at residues 416–488 (LDRK…GETA) and 577–648 (RGTS…SQSS). At S685 the chain carries Phosphoserine. The interval 704–727 (LLLQQKPPDDPVVKPKDRPPSARV) is disordered. Over residues 710–723 (PPDDPVVKPKDRPP) the composition is skewed to basic and acidic residues. A phosphoserine mark is found at S1025, S1087, and S1172. Positions 1331–1360 (LTESREVSSADNVSVYPSVSEEPVENKERK) are disordered. Residue S1541 is modified to Phosphoserine. Positions 1700–1727 (EAELHKETTGPGTAGPQSNTTSSLKGER) are disordered. Residues 1714–1723 (GPQSNTTSSL) are compositionally biased toward polar residues. Residue S1848 is modified to Phosphoserine. A Glycyl lysine isopeptide (Lys-Gly) (interchain with G-Cter in SUMO2) cross-link involves residue K2007. Phosphoserine is present on residues S2009, S2037, S2062, and S2066. The disordered stretch occupies residues 2046 to 2069 (SDPRPQGQPRRGYTASSLDSSSSW).

It belongs to the TASOR family.

The chain is Protein TASOR 2 from Homo sapiens (Human).